The primary structure comprises 1043 residues: Sarcoplasmic/endoplasmic reticulum calcium ATPase 2 (1043 aa).

The Cytoplasmic segment spans residues 1–48; the sequence is MENAHTKTVEEVLGHFGVNESTGLSLEQVKKLKERWGSNELPAEEGKT. A Phosphoserine modification is found at Ser38. A helical transmembrane segment spans residues 49–69; it reads LLELVIEQFEDLLVRILLLAA. Residues 70-89 are Lumenal-facing; that stretch reads CISFVLAWFEEGEETITAFV. The chain crosses the membrane as a helical span at residues 90–110; sequence EPFVILLILVANAIVGVWQER. The Cytoplasmic portion of the chain corresponds to 111 to 253; sequence NAENAIEALK…QERTPLQQKL (143 aa). The helical transmembrane segment at 254-273 threads the bilayer; it reads DEFGEQLSKVISLICIAVWI. Over 274 to 295 the chain is Lumenal; the sequence is INIGHFNDPVHGGSWIRGAIYY. 2 positions are modified to 3'-nitrotyrosine: Tyr294 and Tyr295. The helical transmembrane segment at 296–313 threads the bilayer; that stretch reads FKIAVALAVAAIPEGLPA. Ca(2+) contacts are provided by Val304, Ala305, Ile307, and Glu309. Residues 314 to 756 are Cytoplasmic-facing; the sequence is VITTCLALGT…EEGRAIYNNM (443 aa). Asp351 acts as the 4-aspartylphosphate intermediate in catalysis. 2 residues coordinate Mg(2+): Asp351 and Thr353. Residue Thr353 participates in ATP binding. At Thr441 the chain carries Phosphothreonine. ATP-binding residues include Glu442, Arg489, and Lys514. A Phosphoserine modification is found at Ser531. Residue Arg559 participates in ATP binding. Residues 575 to 594 are interaction with HAX1; that stretch reads MHLEDSANFIKYETNLTFVG. Ser580 carries the post-translational modification Phosphoserine. Positions 624, 625, and 626 each coordinate ATP. Phosphoserine is present on residues Ser661 and Ser663. ATP-binding residues include Arg677 and Lys683. Asp702 is a binding site for Mg(2+). Asn705 serves as a coordination point for ATP. The helical transmembrane segment at 757–776 threads the bilayer; sequence KQFIRYLISSNVGEVVCIFL. Residues Asn767 and Glu770 each coordinate Ca(2+). Residues 777–786 are Lumenal-facing; the sequence is TAALGFPEAL. Residues 787–807 form a helical membrane-spanning segment; that stretch reads IPVQLLWVNLVTDGLPATALG. The interval 787 to 807 is interaction with PLN; the sequence is IPVQLLWVNLVTDGLPATALG. An interaction with TMEM64 and PDIA3 region spans residues 788-1043; that stretch reads PVQLLWVNLV…DTNFSDMFWS (256 aa). Ca(2+) contacts are provided by Asn795, Thr798, and Asp799. The Cytoplasmic portion of the chain corresponds to 808–827; the sequence is FNPPDLDIMNKPPRNPKEPL. Residues 828 to 850 form a helical membrane-spanning segment; it reads ISGWLFFRYLAIGCYVGAATVGA. Residues 851–896 lie on the Lumenal side of the membrane; sequence AAWWFIAADGGPRVSFYQLSHFLQCKEDNPDFEGVDCAIFESPYPM. An intrachain disulfide couples Cys875 to Cys887. The chain crosses the membrane as a helical span at residues 897–916; that stretch reads TMALSVLVTIEMCNALNSLS. Glu907 contributes to the Ca(2+) binding site. Residues 917-929 are Cytoplasmic-facing; sequence ENQSLLRMPPWEN. The helical transmembrane segment at 930–948 threads the bilayer; it reads IWLVGSICLSMSLHFLILY. Residues 931–942 are interaction with PLN; that stretch reads WLVGSICLSMSL. The Lumenal portion of the chain corresponds to 949 to 963; sequence VEPLPLIFQITPLNL. A helical membrane pass occupies residues 964-984; the sequence is TQWLMVLKISLPVILMDETLK. Residues 985-1043 are Cytoplasmic-facing; the sequence is FVARNYLEPGKECAQPATKPSCSLSACTDGISWPFVLLIMPLVVWVYSTDTNFSDMFWS.

The protein belongs to the cation transport ATPase (P-type) (TC 3.A.3) family. Type IIA subfamily. As to quaternary structure, interacts with sarcolipin (SLN); the interaction inhibits ATP2A2 Ca(2+) affinity. Interacts with phospholamban (PLN); the interaction inhibits ATP2A2 Ca(2+) affinity. Interacts with myoregulin (MRLN). Interacts with ARLN and ERLN; the interactions inhibit ATP2A2 Ca(2+) affinity. Interacts with STRIT1/DWORF; the interaction results in activation of ATP2A2. Interacts with the monomeric forms of SLN, PLN, ARLN, ERLN and STRI1/DWORF. Interacts with HAX1. Interacts with S100A8 and S100A9. Interacts with SLC35G1 and STIM1. Interacts with TMEM203. Interacts with TMEM64 and PDIA3. Interacts with TMX1. Interacts with TMX2. Interacts with VMP1; VMP1 competes with PLN and SLN to prevent them from forming an inhibitory complex with ATP2A2. Interacts with ULK1. Interacts with S100A1 in a Ca(2+)-dependent manner. Interacts with TUNAR. Interacts with FLVCR2; this interaction occurs in the absence of heme and promotes ATP2A2 proteasomal degradation; this complex is dissociated upon heme binding. Interacts with FNIP1. In terms of assembly, interacts with TRAM2 (via C-terminus). Requires Mg(2+) as cofactor. In terms of processing, nitrated under oxidative stress. Nitration on the two tyrosine residues inhibits catalytic activity. Serotonylated on Gln residues by TGM2 in response to hypoxia, leading to its inactivation. Isoform 2 is highly expressed in heart and slow twitch skeletal muscle. Isoform 1 is widely expressed.

It localises to the endoplasmic reticulum membrane. Its subcellular location is the sarcoplasmic reticulum membrane. The catalysed reaction is Ca(2+)(in) + ATP + H2O = Ca(2+)(out) + ADP + phosphate + H(+). Its activity is regulated as follows. Has different conformational states with differential Ca2+ affinity. The E1 conformational state (active form) shows high Ca(2+) affinity, while the E2 state exhibits low Ca(2+) affinity. Binding of ATP allosterically increases its affinity for subsequent binding of Ca2+. Reversibly inhibited by phospholamban (PLN) at low calcium concentrations. PLN inhibits ATP2A2 Ca(2+) affinity by disrupting its allosteric activation by ATP. Inhibited by sarcolipin (SLN) and myoregulin (MRLN). The inhibition is blocked by VMP1. Enhanced by STRIT1/DWORF; STRIT1 increases activity by displacing sarcolipin (SLN), phospholamban (PLN) and myoregulin (MRLN). Stabilizes SERCA2 in its E2 state. Its function is as follows. This magnesium-dependent enzyme catalyzes the hydrolysis of ATP coupled with the translocation of calcium from the cytosol to the sarcoplasmic reticulum lumen. Involved in autophagy in response to starvation. Upon interaction with VMP1 and activation, controls ER-isolation membrane contacts for autophagosome formation. Also modulates ER contacts with lipid droplets, mitochondria and endosomes. In coordination with FLVCR2 mediates heme-stimulated switching from mitochondrial ATP synthesis to thermogenesis. Involved in the regulation of the contraction/relaxation cycle. Acts as a regulator of TNFSF11-mediated Ca(2+) signaling pathways via its interaction with TMEM64 which is critical for the TNFSF11-induced CREB1 activation and mitochondrial ROS generation necessary for proper osteoclast generation. Association between TMEM64 and SERCA2 in the ER leads to cytosolic Ca(2+) spiking for activation of NFATC1 and production of mitochondrial ROS, thereby triggering Ca(2+) signaling cascades that promote osteoclast differentiation and activation. In Rattus norvegicus (Rat), this protein is Sarcoplasmic/endoplasmic reticulum calcium ATPase 2 (Atp2a2).